We begin with the raw amino-acid sequence, 162 residues long: D-aminoacyl-tRNA deacylase (162 aa).

A Gly-cisPro motif, important for rejection of L-amino acids motif is present at residues 145–146 (GP).

It belongs to the DTD family. Homodimer.

It is found in the cytoplasm. It carries out the reaction glycyl-tRNA(Ala) + H2O = tRNA(Ala) + glycine + H(+). The catalysed reaction is a D-aminoacyl-tRNA + H2O = a tRNA + a D-alpha-amino acid + H(+). An aminoacyl-tRNA editing enzyme that deacylates mischarged D-aminoacyl-tRNAs. Also deacylates mischarged glycyl-tRNA(Ala), protecting cells against glycine mischarging by AlaRS. Acts via tRNA-based rather than protein-based catalysis; rejects L-amino acids rather than detecting D-amino acids in the active site. By recycling D-aminoacyl-tRNA to D-amino acids and free tRNA molecules, this enzyme counteracts the toxicity associated with the formation of D-aminoacyl-tRNA entities in vivo and helps enforce protein L-homochirality. This is D-aminoacyl-tRNA deacylase from Bifidobacterium longum (strain NCC 2705).